A 196-amino-acid polypeptide reads, in one-letter code: Large ribosomal subunit protein uL5 (196 aa).

The protein belongs to the universal ribosomal protein uL5 family. In terms of assembly, part of the 50S ribosomal subunit; part of the 5S rRNA/L5/L18/L25 subcomplex. Contacts the 5S rRNA and the P site tRNA. Forms a bridge to the 30S subunit in the 70S ribosome.

This is one of the proteins that bind and probably mediate the attachment of the 5S RNA into the large ribosomal subunit, where it forms part of the central protuberance. In the 70S ribosome it contacts protein S13 of the 30S subunit (bridge B1b), connecting the 2 subunits; this bridge is implicated in subunit movement. Contacts the P site tRNA; the 5S rRNA and some of its associated proteins might help stabilize positioning of ribosome-bound tRNAs. This Chlorobium phaeobacteroides (strain BS1) protein is Large ribosomal subunit protein uL5.